We begin with the raw amino-acid sequence, 541 residues long: DNA ligase 1 (541 aa).

Glu234 lines the ATP pocket. The active-site N6-AMP-lysine intermediate is Lys236. ATP contacts are provided by Arg241, Arg256, Glu286, Phe325, Arg398, and Lys404.

Belongs to the ATP-dependent DNA ligase family. Mg(2+) serves as cofactor.

It carries out the reaction ATP + (deoxyribonucleotide)n-3'-hydroxyl + 5'-phospho-(deoxyribonucleotide)m = (deoxyribonucleotide)n+m + AMP + diphosphate.. Its function is as follows. DNA ligase that seals nicks in double-stranded DNA during DNA replication, DNA recombination and DNA repair. The chain is DNA ligase 1 from Korarchaeum cryptofilum (strain OPF8).